The primary structure comprises 383 residues: Succinyl-diaminopimelate desuccinylase (383 aa).

Residue His72 participates in Zn(2+) binding. Residue Asp74 is part of the active site. Asp105 contributes to the Zn(2+) binding site. The active-site Proton acceptor is the Glu137. Residues Glu138, Glu167, and His352 each coordinate Zn(2+).

The protein belongs to the peptidase M20A family. DapE subfamily. In terms of assembly, homodimer. It depends on Zn(2+) as a cofactor. Co(2+) is required as a cofactor.

The enzyme catalyses N-succinyl-(2S,6S)-2,6-diaminopimelate + H2O = (2S,6S)-2,6-diaminopimelate + succinate. It participates in amino-acid biosynthesis; L-lysine biosynthesis via DAP pathway; LL-2,6-diaminopimelate from (S)-tetrahydrodipicolinate (succinylase route): step 3/3. Functionally, catalyzes the hydrolysis of N-succinyl-L,L-diaminopimelic acid (SDAP), forming succinate and LL-2,6-diaminopimelate (DAP), an intermediate involved in the bacterial biosynthesis of lysine and meso-diaminopimelic acid, an essential component of bacterial cell walls. The polypeptide is Succinyl-diaminopimelate desuccinylase (Ehrlichia ruminantium (strain Gardel)).